Here is a 265-residue protein sequence, read N- to C-terminus: 3-methyl-2-oxobutanoate hydroxymethyltransferase (265 aa).

Residues Asp43 and Asp82 each coordinate Mg(2+). 3-methyl-2-oxobutanoate-binding positions include 43–44 (DS), Asp82, and Lys111. A Mg(2+)-binding site is contributed by Glu113. Catalysis depends on Glu180, which acts as the Proton acceptor.

It belongs to the PanB family. Homodecamer; pentamer of dimers. The cofactor is Mg(2+).

Its subcellular location is the cytoplasm. The enzyme catalyses 3-methyl-2-oxobutanoate + (6R)-5,10-methylene-5,6,7,8-tetrahydrofolate + H2O = 2-dehydropantoate + (6S)-5,6,7,8-tetrahydrofolate. It functions in the pathway cofactor biosynthesis; (R)-pantothenate biosynthesis; (R)-pantoate from 3-methyl-2-oxobutanoate: step 1/2. Functionally, catalyzes the reversible reaction in which hydroxymethyl group from 5,10-methylenetetrahydrofolate is transferred onto alpha-ketoisovalerate to form ketopantoate. This is 3-methyl-2-oxobutanoate hydroxymethyltransferase from Francisella tularensis subsp. mediasiatica (strain FSC147).